Here is an 801-residue protein sequence, read N- to C-terminus: MNSSSWSAPDHSHHPALHTAADDDFHQYLDINDMGDLSDALDFDFRDFGADHHTAPHAGRHAADHLLHPSGGEHLDTPMTGTDMSMILSPVDHAMLRHGVQQQQHHQQQQHQQHQMPTITTTAPYQNAPTALIQPSTPSEAIVNTIDAQIQFLQQQKLHAQHQQLQEQQAAFFASQQNHIVPPTPQSLELTAGSSQNYYAQSTLSDQHHSGPQKQQQPQQAIDYRYTRIKDQHDMSFTPLVSPAVTPLETHFPIDTPFAVPGAYFSPLTSPALHAQNDALGIIDQRLGMMSGSSPREMELEPPAMSQASVSPGDLARKTRKNAVKARAKSGSGIKQSPISKPIRRKTATTPMLNPQALNQLVENAAPSQERQQPLTPLIPTSSSSTAGVTDSENGSISPENLNDVVLPVEMPPPPLPKPRSAKPSPFLAPQASGSAVPINLQPGRPGIASPATPASLMKLSSPSNRNPSVVGTGSHDPMDPDHIENFELPDSINFSSAPKPAPIITTLGTPALDPLQKAAAPLQTPGLPPPPSPAVAKPLALPSAALSSPQLKPDSAHSLKRTPQLAPMGRSSKKRASVTSIQMSPALRPKISPSIKPLLPGGSAGAEDAASILLATKSNYQRILEGNTVPGVSYPSELSTNLTSKRTSHKIAEQGRRNRINSALQEIATLLPKAPAKEGGDGDGDGHSSSGGGGGSGGADREDKREKDKDKAGGGIPNSKASTVEMAIEYIKQLQKEVADANKRAEEAERKLVEMKMQGGAATGSGSSVGDAGDLGTPTTEANPVVDEDLKSGGGDAMDE.

Disordered regions lie at residues 292-317 (GSSP…DLAR), 366-607 (APSQ…SAGA), 628-725 (NTVP…ASTV), and 756-801 (MKMQ…AMDE). The span at 374-386 (PLTPLIPTSSSST) shows a compositional bias: low complexity. Composition is skewed to polar residues over residues 387-401 (AGVT…SPEN) and 459-472 (KLSS…SVVG). The tract at residues 446–540 (PGIASPATPA…PPSPAVAKPL (95 aa)) is interaction with negative regulatory factor. The segment covering 477-486 (DPMDPDHIEN) has biased composition (basic and acidic residues). Low complexity predominate over residues 535-554 (AVAKPLALPSAALSSPQLKP). The span at 637–646 (SELSTNLTSK) shows a compositional bias: polar residues. The bHLH domain occupies 645–735 (SKRTSHKIAE…EMAIEYIKQL (91 aa)). Over residues 676–687 (PAKEGGDGDGDG) the composition is skewed to basic and acidic residues. Residues 690-699 (SSGGGGGSGG) are compositionally biased toward gly residues. Residues 700–713 (ADREDKREKDKDKA) show a composition bias toward basic and acidic residues. The segment covering 765–777 (GSGSSVGDAGDLG) has biased composition (low complexity).

Binds DNA as a dimer.

Its subcellular location is the nucleus. Its function is as follows. Factor that activates the transcription of structural genes for phosphorus acquisition. The polypeptide is Phosphorus acquisition-controlling protein (nuc-1) (Neurospora crassa (strain ATCC 24698 / 74-OR23-1A / CBS 708.71 / DSM 1257 / FGSC 987)).